Here is a 245-residue protein sequence, read N- to C-terminus: Ribonuclease PH (245 aa).

Phosphate contacts are provided by residues Arg93 and 131–133 (GTR).

The protein belongs to the RNase PH family. Homohexameric ring arranged as a trimer of dimers.

It catalyses the reaction tRNA(n+1) + phosphate = tRNA(n) + a ribonucleoside 5'-diphosphate. Its function is as follows. Phosphorolytic 3'-5' exoribonuclease that plays an important role in tRNA 3'-end maturation. Removes nucleotide residues following the 3'-CCA terminus of tRNAs; can also add nucleotides to the ends of RNA molecules by using nucleoside diphosphates as substrates, but this may not be physiologically important. Probably plays a role in initiation of 16S rRNA degradation (leading to ribosome degradation) during starvation. The protein is Ribonuclease PH of Corynebacterium glutamicum (strain R).